Reading from the N-terminus, the 411-residue chain is Argininosuccinate synthase (411 aa).

ATP-binding positions include 10-18 (AYSGGLDTS) and Ala37. Positions 89 and 94 each coordinate L-citrulline. Gly119 lines the ATP pocket. 3 residues coordinate L-aspartate: Thr121, Asn125, and Asp126. Asn125 serves as a coordination point for L-citrulline. L-citrulline contacts are provided by Arg129, Ser178, Ser187, Glu263, and Tyr275.

This sequence belongs to the argininosuccinate synthase family. Type 1 subfamily. Homotetramer.

Its subcellular location is the cytoplasm. It carries out the reaction L-citrulline + L-aspartate + ATP = 2-(N(omega)-L-arginino)succinate + AMP + diphosphate + H(+). Its pathway is amino-acid biosynthesis; L-arginine biosynthesis; L-arginine from L-ornithine and carbamoyl phosphate: step 2/3. In Aeromonas hydrophila subsp. hydrophila (strain ATCC 7966 / DSM 30187 / BCRC 13018 / CCUG 14551 / JCM 1027 / KCTC 2358 / NCIMB 9240 / NCTC 8049), this protein is Argininosuccinate synthase.